Here is a 558-residue protein sequence, read N- to C-terminus: DALR anticodon-binding domain-containing protein 3 (558 aa).

Residues 213 to 240 form a disordered region; that stretch reads KALENSAYRDRETEKGKRRSRGEEIEGE.

The sequence is that of DALR anticodon-binding domain-containing protein 3 (dalrd3) from Danio rerio (Zebrafish).